The primary structure comprises 370 residues: Glutamate 5-kinase (370 aa).

An ATP-binding site is contributed by lysine 17. Substrate contacts are provided by serine 56, aspartate 143, and asparagine 155. ATP is bound at residue serine 175 to aspartate 176. The region spanning lysine 280–proline 357 is the PUA domain.

Belongs to the glutamate 5-kinase family.

It localises to the cytoplasm. It carries out the reaction L-glutamate + ATP = L-glutamyl 5-phosphate + ADP. Its pathway is amino-acid biosynthesis; L-proline biosynthesis; L-glutamate 5-semialdehyde from L-glutamate: step 1/2. Functionally, catalyzes the transfer of a phosphate group to glutamate to form L-glutamate 5-phosphate. This Paracoccus denitrificans (strain Pd 1222) protein is Glutamate 5-kinase.